Reading from the N-terminus, the 227-residue chain is Thiamine-phosphate synthase (227 aa).

Residues 46–50 and Asn87 each bind 4-amino-2-methyl-5-(diphosphooxymethyl)pyrimidine; that span reads QLRDK. The Mg(2+) site is built by Asp88 and Asp107. Ser126 serves as a coordination point for 4-amino-2-methyl-5-(diphosphooxymethyl)pyrimidine. Position 152–154 (152–154) interacts with 2-[(2R,5Z)-2-carboxy-4-methylthiazol-5(2H)-ylidene]ethyl phosphate; it reads TPT. Lys155 serves as a coordination point for 4-amino-2-methyl-5-(diphosphooxymethyl)pyrimidine. Gly183 provides a ligand contact to 2-[(2R,5Z)-2-carboxy-4-methylthiazol-5(2H)-ylidene]ethyl phosphate.

The protein belongs to the thiamine-phosphate synthase family. The cofactor is Mg(2+).

The catalysed reaction is 2-[(2R,5Z)-2-carboxy-4-methylthiazol-5(2H)-ylidene]ethyl phosphate + 4-amino-2-methyl-5-(diphosphooxymethyl)pyrimidine + 2 H(+) = thiamine phosphate + CO2 + diphosphate. It catalyses the reaction 2-(2-carboxy-4-methylthiazol-5-yl)ethyl phosphate + 4-amino-2-methyl-5-(diphosphooxymethyl)pyrimidine + 2 H(+) = thiamine phosphate + CO2 + diphosphate. The enzyme catalyses 4-methyl-5-(2-phosphooxyethyl)-thiazole + 4-amino-2-methyl-5-(diphosphooxymethyl)pyrimidine + H(+) = thiamine phosphate + diphosphate. Its pathway is cofactor biosynthesis; thiamine diphosphate biosynthesis; thiamine phosphate from 4-amino-2-methyl-5-diphosphomethylpyrimidine and 4-methyl-5-(2-phosphoethyl)-thiazole: step 1/1. In terms of biological role, condenses 4-methyl-5-(beta-hydroxyethyl)thiazole monophosphate (THZ-P) and 2-methyl-4-amino-5-hydroxymethyl pyrimidine pyrophosphate (HMP-PP) to form thiamine monophosphate (TMP). In Mycolicibacterium smegmatis (strain ATCC 700084 / mc(2)155) (Mycobacterium smegmatis), this protein is Thiamine-phosphate synthase.